Here is a 294-residue protein sequence, read N- to C-terminus: tRNA dimethylallyltransferase (294 aa).

Residue glycine 10–threonine 17 coordinates ATP. Threonine 12–threonine 17 serves as a coordination point for substrate. The segment at aspartate 35–glutamine 38 is interaction with substrate tRNA.

It belongs to the IPP transferase family. In terms of assembly, monomer. Mg(2+) serves as cofactor.

It catalyses the reaction adenosine(37) in tRNA + dimethylallyl diphosphate = N(6)-dimethylallyladenosine(37) in tRNA + diphosphate. In terms of biological role, catalyzes the transfer of a dimethylallyl group onto the adenine at position 37 in tRNAs that read codons beginning with uridine, leading to the formation of N6-(dimethylallyl)adenosine (i(6)A). The chain is tRNA dimethylallyltransferase from Streptococcus pneumoniae (strain P1031).